Reading from the N-terminus, the 243-residue chain is Ion-translocating oxidoreductase complex subunit E (243 aa).

6 helical membrane-spanning segments follow: residues 40–60, 72–92, 94–114, 129–149, 152–172, and 183–203; these read LGMGLATTVVLILSNVVISAL, AFILIIAAIVTVVDLALNAWL, DLHKVLGLFIALIVTNCAILG, ALDGLMMGIGFTLALVVVGAI, ILGSGTLFAQASLLLGPHFAF, and GFLIMILPPGGFLVVGGLFAL.

This sequence belongs to the NqrDE/RnfAE family. As to quaternary structure, the complex is composed of six subunits: RnfA, RnfB, RnfC, RnfD, RnfE and RnfG.

It localises to the cellular chromatophore membrane. In terms of biological role, part of a membrane-bound complex that couples electron transfer with translocation of ions across the membrane. Required for nitrogen fixation. Involved in electron transfer to nitrogenase. The chain is Ion-translocating oxidoreductase complex subunit E from Rhodobacter capsulatus (Rhodopseudomonas capsulata).